We begin with the raw amino-acid sequence, 106 residues long: Phosphoribosyl-ATP pyrophosphatase (106 aa).

The protein belongs to the PRA-PH family.

The protein localises to the cytoplasm. The enzyme catalyses 1-(5-phospho-beta-D-ribosyl)-ATP + H2O = 1-(5-phospho-beta-D-ribosyl)-5'-AMP + diphosphate + H(+). It participates in amino-acid biosynthesis; L-histidine biosynthesis; L-histidine from 5-phospho-alpha-D-ribose 1-diphosphate: step 2/9. In Lactiplantibacillus plantarum (strain ATCC BAA-793 / NCIMB 8826 / WCFS1) (Lactobacillus plantarum), this protein is Phosphoribosyl-ATP pyrophosphatase.